We begin with the raw amino-acid sequence, 74 residues long: DNA-directed RNA polymerase subunit omega (74 aa).

The protein belongs to the RNA polymerase subunit omega family. As to quaternary structure, the RNAP catalytic core consists of 2 alpha, 1 beta, 1 beta' and 1 omega subunit. When a sigma factor is associated with the core the holoenzyme is formed, which can initiate transcription.

The catalysed reaction is RNA(n) + a ribonucleoside 5'-triphosphate = RNA(n+1) + diphosphate. Promotes RNA polymerase assembly. Latches the N- and C-terminal regions of the beta' subunit thereby facilitating its interaction with the beta and alpha subunits. The polypeptide is DNA-directed RNA polymerase subunit omega (Campylobacter jejuni subsp. jejuni serotype O:6 (strain 81116 / NCTC 11828)).